The primary structure comprises 1171 residues: Pyruvate-flavodoxin oxidoreductase (1171 aa).

4Fe-4S ferredoxin-type domains follow at residues 682–711 and 736–767; these read EVPV…PALL and YHLA…MQSL. Positions 691, 694, 697, 701, 745, 748, 751, 755, 811, 814, 839, and 1072 each coordinate [4Fe-4S] cluster.

It belongs to the pyruvate:ferredoxin/flavodoxin oxidoreductase family. Requires [4Fe-4S] cluster as cofactor.

It catalyses the reaction oxidized [flavodoxin] + pyruvate + CoA + 2 H(+) = reduced [flavodoxin] + acetyl-CoA + CO2. Oxidoreductase required for the transfer of electrons from pyruvate to flavodoxin, which reduces nitrogenase. In Klebsiella pneumoniae, this protein is Pyruvate-flavodoxin oxidoreductase (nifJ).